Here is a 361-residue protein sequence, read N- to C-terminus: Peptide chain release factor 1 (361 aa).

Gln-237 bears the N5-methylglutamine mark. Residues Gln-285–Ser-306 are disordered.

It belongs to the prokaryotic/mitochondrial release factor family. Methylated by PrmC. Methylation increases the termination efficiency of RF1.

The protein resides in the cytoplasm. Its function is as follows. Peptide chain release factor 1 directs the termination of translation in response to the peptide chain termination codons UAG and UAA. The chain is Peptide chain release factor 1 from Alkalilimnicola ehrlichii (strain ATCC BAA-1101 / DSM 17681 / MLHE-1).